The following is a 130-amino-acid chain: MDSLGSKGESRIAEWLTDKDYLILEKNWRTRTGEIDIIALDKTEQTSSGGILVFIEVKTLLKTELSDLDLIINKKKQERIIKTAKHFLANNRKYNKMYIRFDVIVLRSNPFLEQPLEILHLKDAFGDCYD.

The protein belongs to the UPF0102 family.

This Treponema denticola (strain ATCC 35405 / DSM 14222 / CIP 103919 / JCM 8153 / KCTC 15104) protein is UPF0102 protein TDE_2303.